Consider the following 128-residue polypeptide: Ribonuclease pancreatic (128 aa).

Residues 1 to 23 (AESSAMKFQRQHVDSEGSSSSNA) form a disordered region. Substrate contacts are provided by K7 and R10. H12 functions as the Proton acceptor in the catalytic mechanism. Disulfide bonds link C26–C84, C40–C95, C58–C110, and C65–C72. Residues 41 to 45 (KPVNT), K66, and R85 contribute to the substrate site. H119 acts as the Proton donor in catalysis.

Belongs to the pancreatic ribonuclease family. Monomer. Interacts with and forms tight 1:1 complexes with RNH1. Dimerization of two such complexes may occur. Interaction with RNH1 inhibits this protein. In terms of tissue distribution, pancreas.

Its subcellular location is the secreted. It carries out the reaction an [RNA] containing cytidine + H2O = an [RNA]-3'-cytidine-3'-phosphate + a 5'-hydroxy-ribonucleotide-3'-[RNA].. The catalysed reaction is an [RNA] containing uridine + H2O = an [RNA]-3'-uridine-3'-phosphate + a 5'-hydroxy-ribonucleotide-3'-[RNA].. In terms of biological role, endonuclease that catalyzes the cleavage of RNA on the 3' side of pyrimidine nucleotides. Acts on single-stranded and double-stranded RNA. The protein is Ribonuclease pancreatic (RNASE1) of Hydrochoerus hydrochaeris (Capybara).